Here is a 271-residue protein sequence, read N- to C-terminus: NADPH-dependent 7-cyano-7-deazaguanine reductase (271 aa).

81-83 (IES) contacts substrate. 83-84 (SK) is an NADPH binding site. The Thioimide intermediate role is filled by cysteine 177. Aspartate 184 serves as the catalytic Proton donor. 216–217 (HE) serves as a coordination point for substrate. Residue 245-246 (RG) coordinates NADPH.

The protein belongs to the GTP cyclohydrolase I family. QueF type 2 subfamily. Homodimer.

It localises to the cytoplasm. The enzyme catalyses 7-aminomethyl-7-carbaguanine + 2 NADP(+) = 7-cyano-7-deazaguanine + 2 NADPH + 3 H(+). It participates in tRNA modification; tRNA-queuosine biosynthesis. Functionally, catalyzes the NADPH-dependent reduction of 7-cyano-7-deazaguanine (preQ0) to 7-aminomethyl-7-deazaguanine (preQ1). The polypeptide is NADPH-dependent 7-cyano-7-deazaguanine reductase (Xanthomonas campestris pv. campestris (strain B100)).